The chain runs to 215 residues: Transmembrane emp24 domain-containing protein 11 (215 aa).

The signal sequence occupies residues 1 to 17 (MQIQTILLCFSFSFSAA). Residues 18 to 167 (FYFHAGEREE…ILKEQDYQRD (150 aa)) are Lumenal-facing. Residues 27–125 (EKCIIEDIPS…KLRIHLDIRV (99 aa)) form the GOLD domain. The N-linked (GlcNAc...) asparagine glycan is linked to Asn-105. Positions 136–171 (QAKDKVNEVTFKLQHLIEQVEQILKEQDYQRDREEN) form a coiled coil. The chain crosses the membrane as a helical span at residues 168–185 (REENFRITSEDTNRNVLW). The Cytoplasmic segment spans residues 186 to 215 (WAFAQILIFISVGIFQMKHLKDFFIAKKLV). A COPII vesicle coat-binding motif is present at residues 208–209 (FF). The short motif at 208–215 (FFIAKKLV) is the COPI vesicle coat-binding element.

This sequence belongs to the EMP24/GP25L family.

It is found in the endoplasmic reticulum membrane. Functionally, part of a complex whose function is to bind Ca(2+) to the ER membrane and thereby regulate the retention of ER resident proteins. The chain is Transmembrane emp24 domain-containing protein 11 (Tmed11) from Mus musculus (Mouse).